The chain runs to 1299 residues: DNA-directed RNA polymerase subunit beta' (1299 aa).

Zn(2+)-binding residues include Cys-60, Cys-62, Cys-75, and Cys-78. The interval 385–405 (GRRGRPVTGPGNRPLKSLSDM) is disordered. Asp-535, Asp-537, and Asp-539 together coordinate Mg(2+). The Zn(2+) site is built by Cys-886, Cys-962, Cys-969, and Cys-972.

It belongs to the RNA polymerase beta' chain family. In terms of assembly, the RNAP catalytic core consists of 2 alpha, 1 beta, 1 beta' and 1 omega subunit. When a sigma factor is associated with the core the holoenzyme is formed, which can initiate transcription. It depends on Mg(2+) as a cofactor. Requires Zn(2+) as cofactor.

It catalyses the reaction RNA(n) + a ribonucleoside 5'-triphosphate = RNA(n+1) + diphosphate. Its function is as follows. DNA-dependent RNA polymerase catalyzes the transcription of DNA into RNA using the four ribonucleoside triphosphates as substrates. The polypeptide is DNA-directed RNA polymerase subunit beta' (Streptomyces coelicolor (strain ATCC BAA-471 / A3(2) / M145)).